The chain runs to 285 residues: Bifunctional protein FolD (285 aa).

Residues 165 to 167 (GRS) and serine 190 each bind NADP(+).

It belongs to the tetrahydrofolate dehydrogenase/cyclohydrolase family. Homodimer.

The enzyme catalyses (6R)-5,10-methylene-5,6,7,8-tetrahydrofolate + NADP(+) = (6R)-5,10-methenyltetrahydrofolate + NADPH. The catalysed reaction is (6R)-5,10-methenyltetrahydrofolate + H2O = (6R)-10-formyltetrahydrofolate + H(+). It functions in the pathway one-carbon metabolism; tetrahydrofolate interconversion. Its function is as follows. Catalyzes the oxidation of 5,10-methylenetetrahydrofolate to 5,10-methenyltetrahydrofolate and then the hydrolysis of 5,10-methenyltetrahydrofolate to 10-formyltetrahydrofolate. The protein is Bifunctional protein FolD of Staphylococcus haemolyticus (strain JCSC1435).